The primary structure comprises 350 residues: Phosphotriesterase-related protein (350 aa).

A divalent metal cation-binding residues include H22, H24, E169, H201, H230, and D298.

This sequence belongs to the metallo-dependent hydrolases superfamily. Phosphotriesterase family. It depends on a divalent metal cation as a cofactor.

This is Phosphotriesterase-related protein from Drosophila persimilis (Fruit fly).